We begin with the raw amino-acid sequence, 579 residues long: Proline--tRNA ligase (579 aa).

It belongs to the class-II aminoacyl-tRNA synthetase family. ProS type 1 subfamily. As to quaternary structure, homodimer.

Its subcellular location is the cytoplasm. The catalysed reaction is tRNA(Pro) + L-proline + ATP = L-prolyl-tRNA(Pro) + AMP + diphosphate. In terms of biological role, catalyzes the attachment of proline to tRNA(Pro) in a two-step reaction: proline is first activated by ATP to form Pro-AMP and then transferred to the acceptor end of tRNA(Pro). As ProRS can inadvertently accommodate and process non-cognate amino acids such as alanine and cysteine, to avoid such errors it has two additional distinct editing activities against alanine. One activity is designated as 'pretransfer' editing and involves the tRNA(Pro)-independent hydrolysis of activated Ala-AMP. The other activity is designated 'posttransfer' editing and involves deacylation of mischarged Ala-tRNA(Pro). The misacylated Cys-tRNA(Pro) is not edited by ProRS. This Chlamydia muridarum (strain MoPn / Nigg) protein is Proline--tRNA ligase.